The following is a 375-amino-acid chain: 23S rRNA (uracil(747)-C(5))-methyltransferase RlmC (375 aa).

[4Fe-4S] cluster-binding residues include Cys-3, Cys-11, Cys-14, and Cys-87. The S-adenosyl-L-methionine site is built by Gln-212, Phe-241, Glu-262, and Asn-307. Cys-334 (nucleophile) is an active-site residue.

This sequence belongs to the class I-like SAM-binding methyltransferase superfamily. RNA M5U methyltransferase family. RlmC subfamily.

The catalysed reaction is uridine(747) in 23S rRNA + S-adenosyl-L-methionine = 5-methyluridine(747) in 23S rRNA + S-adenosyl-L-homocysteine + H(+). Functionally, catalyzes the formation of 5-methyl-uridine at position 747 (m5U747) in 23S rRNA. This Shigella dysenteriae serotype 1 (strain Sd197) protein is 23S rRNA (uracil(747)-C(5))-methyltransferase RlmC.